A 480-amino-acid polypeptide reads, in one-letter code: Aspartyl/glutamyl-tRNA(Asn/Gln) amidotransferase subunit B (480 aa).

It belongs to the GatB/GatE family. GatB subfamily. Heterotrimer of A, B and C subunits.

The enzyme catalyses L-glutamyl-tRNA(Gln) + L-glutamine + ATP + H2O = L-glutaminyl-tRNA(Gln) + L-glutamate + ADP + phosphate + H(+). It carries out the reaction L-aspartyl-tRNA(Asn) + L-glutamine + ATP + H2O = L-asparaginyl-tRNA(Asn) + L-glutamate + ADP + phosphate + 2 H(+). Allows the formation of correctly charged Asn-tRNA(Asn) or Gln-tRNA(Gln) through the transamidation of misacylated Asp-tRNA(Asn) or Glu-tRNA(Gln) in organisms which lack either or both of asparaginyl-tRNA or glutaminyl-tRNA synthetases. The reaction takes place in the presence of glutamine and ATP through an activated phospho-Asp-tRNA(Asn) or phospho-Glu-tRNA(Gln). This is Aspartyl/glutamyl-tRNA(Asn/Gln) amidotransferase subunit B from Streptococcus agalactiae serotype Ia (strain ATCC 27591 / A909 / CDC SS700).